The primary structure comprises 522 residues: E3 ubiquitin-protein ligase DMA2 (522 aa).

2 disordered regions span residues 1–56 (MYTP…RPAS) and 69–92 (QNSQ…PSNS). Residues 14 to 35 (APTSSMTSNSSSASNANTTSSS) show a composition bias toward low complexity. Positions 36–49 (GINPRNRASGTPSN) are enriched in polar residues. S206 is subject to Phosphoserine. Glycyl lysine isopeptide (Lys-Gly) (interchain with G-Cter in ubiquitin) cross-links involve residues K211, K256, K258, K288, K310, K333, K343, K346, K366, K406, K412, and K423. Residues 295-358 (LVIGRYTERV…SGTFLNHQRL (64 aa)) enclose the FHA domain. The RING-type; atypical zinc-finger motif lies at 433–477 (CSICLCKIKPCQAIFISPCAHSWHFRCVRRLVMLSYPQFVCPNCR).

Belongs to the DMA1 family. UBC4-dependent autoubiquitination occurs at Lys-211, Lys-258, Lys-288, Lys-310, Lys-333, Lys-343, Lys-346, Lys-366, Lys-406, Lys-412 and Lys-423. UBC13/MMS2-dependent autoubiquitination occurs at Lys-258, Lys-310, Lys-346 and Lys-366. Lys-211, Lys-256, Lys-288, Lys-310, Lys-343, Lys-258, Lys-366 and Lys-412 are also ubiquitinated in trans by DMA1 E3 ligase in association with UBC4.

It is found in the cytoplasm. It carries out the reaction S-ubiquitinyl-[E2 ubiquitin-conjugating enzyme]-L-cysteine + [acceptor protein]-L-lysine = [E2 ubiquitin-conjugating enzyme]-L-cysteine + N(6)-ubiquitinyl-[acceptor protein]-L-lysine.. In terms of biological role, E3 ubiquitin-protein ligase which functions in cell cycle retarding in conjunction with the UBC4 and UBC13/MMS2 complex, 2 E2 ubiquitin conjugating enzymes. Involved in nutritional control of the cell cycle. Required for proper spindle positioning, likely regulating septin ring deposition at the bud neck. The sequence is that of E3 ubiquitin-protein ligase DMA2 (DMA2) from Saccharomyces cerevisiae (strain YJM789) (Baker's yeast).